The sequence spans 256 residues: uncharacterized protein (256 aa).

A compositionally biased stretch (basic and acidic residues) spans 201 to 214 (ACKEGVDSSCKEEG). The disordered stretch occupies residues 201 to 231 (ACKEGVDSSCKEEGGGCEEEGSGSEEDSDDS). Residues 215–231 (GGCEEEGSGSEEDSDDS) are compositionally biased toward acidic residues.

The protein resides in the mitochondrion. This is an uncharacterized protein from Zea mays (Maize).